The sequence spans 350 residues: Protein-glutamate methylesterase/protein-glutamine glutaminase 6 (350 aa).

Positions 11-126 constitute a Response regulatory domain; sequence RVLVVDDSAA…LAPVREELLE (116 aa). Residue Asp-62 is modified to 4-aspartylphosphate. Positions 150 to 347 constitute a CheB-type methylesterase domain; it reads ELEPARVAVV…ARLVEFARDA (198 aa). Catalysis depends on residues Ser-162, His-189, and Asp-289.

It belongs to the CheB family. In terms of processing, phosphorylated by CheA. Phosphorylation of the N-terminal regulatory domain activates the methylesterase activity.

Its subcellular location is the cytoplasm. It catalyses the reaction [protein]-L-glutamate 5-O-methyl ester + H2O = L-glutamyl-[protein] + methanol + H(+). It carries out the reaction L-glutaminyl-[protein] + H2O = L-glutamyl-[protein] + NH4(+). Functionally, involved in chemotaxis. Part of a chemotaxis signal transduction system that modulates chemotaxis in response to various stimuli. Catalyzes the demethylation of specific methylglutamate residues introduced into the chemoreceptors (methyl-accepting chemotaxis proteins or MCP) by CheR. Also mediates the irreversible deamidation of specific glutamine residues to glutamic acid. The polypeptide is Protein-glutamate methylesterase/protein-glutamine glutaminase 6 (Anaeromyxobacter dehalogenans (strain 2CP-C)).